Here is a 321-residue protein sequence, read N- to C-terminus: Glucokinase (321 aa).

G8–T13 is an ATP binding site.

Belongs to the bacterial glucokinase family.

The protein localises to the cytoplasm. It catalyses the reaction D-glucose + ATP = D-glucose 6-phosphate + ADP + H(+). The chain is Glucokinase from Tolumonas auensis (strain DSM 9187 / NBRC 110442 / TA 4).